We begin with the raw amino-acid sequence, 452 residues long: MKRILVSLYEKEKYLDILRELHEKGWEIWASSGTAKFLKSNGIEANDVSTITGFENLLGGLVKTLHPEIFAGILGPEPRWDVVFVDLYPPPDIDIGGVALLRAAAKNWKKVKPAFDMETLKLAIEIDDEETRKYLAGMTFAFTSVYDSIRANQFVEGISLAFKREDLQLRYGENPHEKAFVYGKPAFEILHEGKTISFNNILDAENAWFMAKNLPRMGAVVVKHQSPCGAAIGEDKVEIVKKAIEADDESSFGGILAVNFEMDEEVAKSLKKYLEVIVAPSFTQEAIEVLSKKKVRLLKPGDYASWAGKMAFGSLVLSERKYPEGNFELVVGEPLSEKELEDLEFAYRVVEGAKSNAVLIAKDGVTVGIGSGQPSRKRAAWIATVMAGEKAKGAVAASDAFFPFPDSLEILAQAGVKAVVAPLGSIRDEEVIEKARELGITFYKAPSRVFRH.

In terms of domain architecture, MGS-like spans 1–115; the sequence is MKRILVSLYE…KNWKKVKPAF (115 aa).

The protein belongs to the PurH family.

The enzyme catalyses (6R)-10-formyltetrahydrofolate + 5-amino-1-(5-phospho-beta-D-ribosyl)imidazole-4-carboxamide = 5-formamido-1-(5-phospho-D-ribosyl)imidazole-4-carboxamide + (6S)-5,6,7,8-tetrahydrofolate. It carries out the reaction IMP + H2O = 5-formamido-1-(5-phospho-D-ribosyl)imidazole-4-carboxamide. The protein operates within purine metabolism; IMP biosynthesis via de novo pathway; 5-formamido-1-(5-phospho-D-ribosyl)imidazole-4-carboxamide from 5-amino-1-(5-phospho-D-ribosyl)imidazole-4-carboxamide (10-formyl THF route): step 1/1. It participates in purine metabolism; IMP biosynthesis via de novo pathway; IMP from 5-formamido-1-(5-phospho-D-ribosyl)imidazole-4-carboxamide: step 1/1. The polypeptide is Bifunctional purine biosynthesis protein PurH (Thermotoga maritima (strain ATCC 43589 / DSM 3109 / JCM 10099 / NBRC 100826 / MSB8)).